The following is a 1192-amino-acid chain: Probable ATP-binding protein BrxC (1192 aa).

The protein belongs to the BrxC family.

BREX systems (bacteriophage exclusion) provide immunity against bacteriophage. A core protein of a type 1 BREX system. This system allows phage adsorption but prevents phage DNA replication, without degradation of the phage DNA. Methylation of bacterial DNA by PglX probably guides self/non-self discrimination. When the brxA-brxB-brxC-pglX and pglZ-brxL operons are transformed into a susceptible B.subtilis strain (BEST7003) they confer resistance to bacteriophages SPbeta, SP16, Zeta, phi3T and SP02 and partial protection to phages SP01 and SP82G (these include lytic and temperate phage). They do not protect against phages phi105, rho10 or rho14. Additionally confers a very slight reduction in efficiency of plasmid transformation. In Bacillus cereus (strain H3081.97), this protein is Probable ATP-binding protein BrxC.